The sequence spans 240 residues: Ribosomal RNA small subunit methyltransferase G (240 aa).

Residues glycine 77, phenylalanine 82, 128–129 (AE), and arginine 148 each bind S-adenosyl-L-methionine. Positions 217–240 (EKRSKTPKKYPRKAGTPNKSPLLK) are disordered.

The protein belongs to the methyltransferase superfamily. RNA methyltransferase RsmG family.

Its subcellular location is the cytoplasm. In terms of biological role, specifically methylates the N7 position of guanine in position 535 of 16S rRNA. The chain is Ribosomal RNA small subunit methyltransferase G from Staphylococcus carnosus (strain TM300).